The primary structure comprises 207 residues: Nuclear transcription factor Y subunit beta (207 aa).

The segment at 1-52 (MTMDGDSSTTDASQLGISADYIGGSHYVIQPHDDTEDSMNDHEDTNGSKESF) is a domain. The tract at residues 27-52 (YVIQPHDDTEDSMNDHEDTNGSKESF) is disordered. Residues 39 to 52 (MNDHEDTNGSKESF) show a composition bias toward basic and acidic residues. Residues 53 to 142 (REQDIYLPIA…PLKLYLQKFR (90 aa)) are b domain. The DNA-binding element occupies 59 to 65 (LPIANVA). Residues 86–97 (VQECVSEFISFI) are subunit association domain (SAD). A Glycyl lysine isopeptide (Lys-Gly) (interchain with G-Cter in ubiquitin) cross-link involves residue K140. The segment at 143-207 (EAMKGEKGIG…ISGVQQIQFS (65 aa)) is c domain.

It belongs to the NFYB/HAP3 subunit family. As to quaternary structure, heterotrimeric transcription factor composed of three components, NF-YA, NF-YB and NF-YC. NF-YB and NF-YC must interact and dimerize for NF-YA association and DNA binding. Interacts with C1QBP. In terms of processing, monoubiquitination at Lys-140 plays an important role in transcriptional activation by allowing the deposition of histone H3 methylations as well as histone H2B monoubiquitination at 'Lys-121'.

It is found in the nucleus. In terms of biological role, component of the sequence-specific heterotrimeric transcription factor (NF-Y) which specifically recognizes a 5'-CCAAT-3' box motif found in the promoters of its target genes. NF-Y can function as both an activator and a repressor, depending on its interacting cofactors. The sequence is that of Nuclear transcription factor Y subunit beta (NFYB) from Homo sapiens (Human).